Here is a 344-residue protein sequence, read N- to C-terminus: Mitogen-activated protein kinase mpkC (344 aa).

One can recognise a Protein kinase domain in the interval 19-298 (YANVQPVGLG…AETALQHPYL (280 aa)). Residues 25 to 33 (VGLGAFGLV) and Lys-48 contribute to the ATP site. Asp-140 acts as the Proton acceptor in catalysis. Thr-170 bears the Phosphothreonine mark. The TXY signature appears at 170 to 172 (TGY). Tyr-172 is subject to Phosphotyrosine.

The protein belongs to the protein kinase superfamily. Ser/Thr protein kinase family. MAP kinase subfamily. HOG1 sub-subfamily. Mg(2+) serves as cofactor. Dually phosphorylated on Thr-170 and Tyr-172, which activates the enzyme.

The enzyme catalyses L-seryl-[protein] + ATP = O-phospho-L-seryl-[protein] + ADP + H(+). It catalyses the reaction L-threonyl-[protein] + ATP = O-phospho-L-threonyl-[protein] + ADP + H(+). With respect to regulation, activated by tyrosine and threonine phosphorylation. In terms of biological role, mitogen-activated protein kinase required for growth on media where sorbitol or mannitol is the sole carbon source. In Aspergillus oryzae (strain ATCC 42149 / RIB 40) (Yellow koji mold), this protein is Mitogen-activated protein kinase mpkC (mpkC).